The chain runs to 141 residues: Large ribosomal subunit protein uL11 (141 aa).

It belongs to the universal ribosomal protein uL11 family. In terms of assembly, part of the ribosomal stalk of the 50S ribosomal subunit. Interacts with L10 and the large rRNA to form the base of the stalk. L10 forms an elongated spine to which L12 dimers bind in a sequential fashion forming a multimeric L10(L12)X complex. In terms of processing, one or more lysine residues are methylated.

Forms part of the ribosomal stalk which helps the ribosome interact with GTP-bound translation factors. The protein is Large ribosomal subunit protein uL11 of Trichlorobacter lovleyi (strain ATCC BAA-1151 / DSM 17278 / SZ) (Geobacter lovleyi).